Consider the following 103-residue polypeptide: Large ribosomal subunit protein uL24 (103 aa).

Belongs to the universal ribosomal protein uL24 family. Part of the 50S ribosomal subunit.

In terms of biological role, one of two assembly initiator proteins, it binds directly to the 5'-end of the 23S rRNA, where it nucleates assembly of the 50S subunit. One of the proteins that surrounds the polypeptide exit tunnel on the outside of the subunit. This Halalkalibacterium halodurans (strain ATCC BAA-125 / DSM 18197 / FERM 7344 / JCM 9153 / C-125) (Bacillus halodurans) protein is Large ribosomal subunit protein uL24.